A 36-amino-acid chain; its full sequence is Potassium channel toxin alpha-KTx 1.9 (36 aa).

Belongs to the short scorpion toxin superfamily. Potassium channel inhibitor family. Alpha-KTx 01 subfamily. Expressed by the venom gland.

The protein localises to the secreted. In terms of biological role, potent selective inhibitor of Kv1/KCNA voltage-gated potassium channels. This Centruroides limbatus (Bark scorpion) protein is Potassium channel toxin alpha-KTx 1.9.